The following is a 1252-amino-acid chain: DNA-directed RNA polymerase subunit beta (1252 aa).

This sequence belongs to the RNA polymerase beta chain family. The RNAP catalytic core consists of 2 alpha, 1 beta, 1 beta' and 1 omega subunit. When a sigma factor is associated with the core the holoenzyme is formed, which can initiate transcription.

The enzyme catalyses RNA(n) + a ribonucleoside 5'-triphosphate = RNA(n+1) + diphosphate. DNA-dependent RNA polymerase catalyzes the transcription of DNA into RNA using the four ribonucleoside triphosphates as substrates. In Chlamydia abortus (strain DSM 27085 / S26/3) (Chlamydophila abortus), this protein is DNA-directed RNA polymerase subunit beta.